Here is an 858-residue protein sequence, read N- to C-terminus: Protein lines (858 aa).

A disordered region spans residues 1–102 (MDTSSAAGSG…NSPTTTPCSS (102 aa)). 2 stretches are compositionally biased toward low complexity: residues 20–30 (STVATSTTSAS) and 65–102 (LDAN…PCSS).

It belongs to the protein lines family. As to quaternary structure, interacts with drm. As to expression, expressed throughout the embryo, including the hindgut, posterior midgut and embryonic epidermis.

The protein resides in the cytoplasm. Its subcellular location is the nucleus. In terms of biological role, has a dual role as a segment polarity protein and as a modulator of the Abd-B protein. Required for Abd-B to activate the transcription of genes (including ems, cut and sal) that are involved in posterior spiracle morphogenesis. Also required for Abd-B to form an eighth abdominal denticle belt. Acts in a hierarchy downstream of drm and upstream of bowl during foregut and hindgut patterning and morphogenesis. Involved in cell rearrangement during elongation of the embryonic hindgut. Required to regulate expression of embryonic hindgut patterning genes in order to establish the large intestine and at least some rectum, and to repress small intestine fate. Required for late wingless (wg)-dependent cell fate specification in the dorsal embryonic epidermis. Acts in concert with wg to regulate expression of wg itself and also to regulate wg-target genes. May have a role in ventral epidermal patterning, independent of wg signaling. This Drosophila melanogaster (Fruit fly) protein is Protein lines.